A 291-amino-acid chain; its full sequence is Diaminopimelate epimerase (291 aa).

Substrate-binding residues include Asn-13, Gln-46, and Asn-66. Residue Cys-75 is the Proton donor of the active site. Residues 76-77 (GN), Asn-170, Asn-203, and 221-222 (ER) contribute to the substrate site. The active-site Proton acceptor is the Cys-230. Substrate is bound at residue 231–232 (GS).

This sequence belongs to the diaminopimelate epimerase family. Homodimer.

The protein resides in the cytoplasm. It catalyses the reaction (2S,6S)-2,6-diaminopimelate = meso-2,6-diaminopimelate. The protein operates within amino-acid biosynthesis; L-lysine biosynthesis via DAP pathway; DL-2,6-diaminopimelate from LL-2,6-diaminopimelate: step 1/1. In terms of biological role, catalyzes the stereoinversion of LL-2,6-diaminopimelate (L,L-DAP) to meso-diaminopimelate (meso-DAP), a precursor of L-lysine and an essential component of the bacterial peptidoglycan. The sequence is that of Diaminopimelate epimerase from Albidiferax ferrireducens (strain ATCC BAA-621 / DSM 15236 / T118) (Rhodoferax ferrireducens).